A 417-amino-acid chain; its full sequence is Glutamate-1-semialdehyde 2,1-aminomutase (417 aa).

Lys-263 is subject to N6-(pyridoxal phosphate)lysine.

This sequence belongs to the class-III pyridoxal-phosphate-dependent aminotransferase family. HemL subfamily. Requires pyridoxal 5'-phosphate as cofactor.

Its subcellular location is the cytoplasm. The enzyme catalyses (S)-4-amino-5-oxopentanoate = 5-aminolevulinate. It functions in the pathway porphyrin-containing compound metabolism; protoporphyrin-IX biosynthesis; 5-aminolevulinate from L-glutamyl-tRNA(Glu): step 2/2. In Methanospirillum hungatei JF-1 (strain ATCC 27890 / DSM 864 / NBRC 100397 / JF-1), this protein is Glutamate-1-semialdehyde 2,1-aminomutase.